Reading from the N-terminus, the 248-residue chain is MSDSDSDSDYELTLSANALAALEEFKREEQQHQEAFQKLYDETDEDFQKKKKEEGMKLFKEDWQLSQFWYSDDTAAILADAILEGADENTVIAIVSAPSVYAAIQKKPTNEIPTEHIYLFEFDKRFELLAGRDHFFFYDYNKPLDFSDEIKGKVDRLLIDPPFLNEDCQTKSSITAKCLLAPNDNSKTKKGVFKHRLISCTGERMSEVISKVYSDTRITTFLPEHSNGLSNEFRCYANFECSSWKFAS.

The protein belongs to the class I-like SAM-binding methyltransferase superfamily. EFM5 family.

It is found in the cytoplasm. S-adenosyl-L-methionine-dependent protein-lysine N-methyltransferase that trimethylates elongation factor 1-alpha (TEF1 and TEF2) at 'Lys-79'. Required for replication of Brome mosaic virus (BMV). This Saccharomyces cerevisiae (strain ATCC 204508 / S288c) (Baker's yeast) protein is Protein-lysine N-methyltransferase EFM5.